A 782-amino-acid polypeptide reads, in one-letter code: Zinc finger protein 786 (782 aa).

One can recognise a KRAB domain in the interval 9 to 80; the sequence is LTFEDVAIYF…WRESQKSGNI (72 aa). Positions 141–164 are disordered; the sequence is PQRHDARAPPPLACGPSESTLKEG. Residues 192-209 form a C2H2-type 1; degenerate zinc finger; the sequence is CGESCWENNHLVMHQRGH. The C2H2-type 2 zinc-finger motif lies at 240-262; it reads FRCGVCGKSFRRKLCLLRHLAAH. The interval 285–364 is disordered; that stretch reads SHRLPQQGEK…EGDTEALQHG (80 aa). The segment at 369–391 adopts a C2H2-type 3; degenerate zinc-finger fold; sequence CSCSECGERSPMSARLASPCRAH. 3 consecutive C2H2-type zinc fingers follow at residues 397–419, 425–447, and 453–475; these read FQCA…QHAH, FSCR…IRVH, and FRCA…QRLH. The C2H2-type 7; degenerate zinc finger occupies 481-503; it reads FQCPECGLSFRLESMLRAHRLRH. C2H2-type zinc fingers lie at residues 509 to 531, 537 to 559, 565 to 587, 593 to 615, 621 to 643, 649 to 670, 676 to 698, 704 to 726, and 732 to 754; these read FSCS…LRVH, FQCL…QHTH, FSCG…LRVH, FQCP…QRLH, FQCP…QLLH, FSCE…IRTH, FQCP…QGLH, FHCP…QRIH, and FACG…IRVH.

It belongs to the krueppel C2H2-type zinc-finger protein family.

It localises to the nucleus. May be involved in transcriptional regulation. The polypeptide is Zinc finger protein 786 (ZNF786) (Homo sapiens (Human)).